Here is a 110-residue protein sequence, read N- to C-terminus: Parvalbumin alpha (110 aa).

EF-hand domains are found at residues 39-74 and 78-110; these read KGPDVMKQVFGILDQDRSGFIEEDELCLMLKGFTPN and LSVKETTALLAAGDKDGDGKIGMDEFVTLVSES. Residues D52, D54, S56, F58, E60, E63, D91, D93, D95, K97, and E102 each contribute to the Ca(2+) site.

This sequence belongs to the parvalbumin family.

In muscle, parvalbumin is thought to be involved in relaxation after contraction. It binds two calcium ions. In Aquarana catesbeiana (American bullfrog), this protein is Parvalbumin alpha.